The primary structure comprises 340 residues: Uroporphyrinogen decarboxylase (340 aa).

Substrate contacts are provided by residues 23–27 (RQAGR), D72, Y147, T202, and H316.

It belongs to the uroporphyrinogen decarboxylase family. In terms of assembly, homodimer.

It is found in the cytoplasm. The catalysed reaction is uroporphyrinogen III + 4 H(+) = coproporphyrinogen III + 4 CO2. It participates in porphyrin-containing compound metabolism; protoporphyrin-IX biosynthesis; coproporphyrinogen-III from 5-aminolevulinate: step 4/4. In terms of biological role, catalyzes the decarboxylation of four acetate groups of uroporphyrinogen-III to yield coproporphyrinogen-III. This is Uroporphyrinogen decarboxylase from Geobacter metallireducens (strain ATCC 53774 / DSM 7210 / GS-15).